The following is a 228-amino-acid chain: Interferon-induced transmembrane protein 10 (228 aa).

At 1-154 (MREGKRGPPC…PDTTEVNDYY (154 aa)) the chain is on the extracellular side. The disordered stretch occupies residues 29–49 (AQGPGQCPAPLGDPASTTDGA). A helical transmembrane segment spans residues 155–175 (LWSIFNFVYLNFCCLGFIALA). 2 S-palmitoyl cysteine lipidation sites follow: Cys-167 and Cys-168. Over 176–200 (YSLKVRDKKLLNDLNGAVEDAKTAR) the chain is Cytoplasmic. Residues 201 to 221 (LFNITSSALAASCIILVFIFL) form a helical membrane-spanning segment. Topologically, residues 222–228 (RYPLTDY) are extracellular.

This sequence belongs to the CD225/Dispanin family.

It is found in the cell membrane. This Homo sapiens (Human) protein is Interferon-induced transmembrane protein 10 (IFITM10).